We begin with the raw amino-acid sequence, 375 residues long: Aminomethyltransferase (375 aa).

Belongs to the GcvT family. In terms of assembly, the glycine cleavage system is composed of four proteins: P, T, L and H.

The catalysed reaction is N(6)-[(R)-S(8)-aminomethyldihydrolipoyl]-L-lysyl-[protein] + (6S)-5,6,7,8-tetrahydrofolate = N(6)-[(R)-dihydrolipoyl]-L-lysyl-[protein] + (6R)-5,10-methylene-5,6,7,8-tetrahydrofolate + NH4(+). In terms of biological role, the glycine cleavage system catalyzes the degradation of glycine. In Ralstonia nicotianae (strain ATCC BAA-1114 / GMI1000) (Ralstonia solanacearum), this protein is Aminomethyltransferase.